The primary structure comprises 510 residues: 2,3-bisphosphoglycerate-independent phosphoglycerate mutase (510 aa).

Residues Asp14 and Ser64 each contribute to the Mn(2+) site. Catalysis depends on Ser64, which acts as the Phosphoserine intermediate. Residues His125, 155–156 (RD), Arg187, Arg193, 259–262 (RADR), and Lys332 contribute to the substrate site. The Mn(2+) site is built by Asp399, His403, Asp440, His441, and His459.

The protein belongs to the BPG-independent phosphoglycerate mutase family. In terms of assembly, monomer. It depends on Mn(2+) as a cofactor.

It carries out the reaction (2R)-2-phosphoglycerate = (2R)-3-phosphoglycerate. The protein operates within carbohydrate degradation; glycolysis; pyruvate from D-glyceraldehyde 3-phosphate: step 3/5. Its function is as follows. Catalyzes the interconversion of 2-phosphoglycerate and 3-phosphoglycerate. Essential for the growth and pathogenicity on the host plant. The sequence is that of 2,3-bisphosphoglycerate-independent phosphoglycerate mutase from Pseudomonas syringae pv. tomato (strain ATCC BAA-871 / DC3000).